A 59-amino-acid chain; its full sequence is Lantipeptide Flvbeta.f (59 aa).

Residues 1-27 (MEKMNNIAGITPENELDEMFDDSVVGA) constitute a propeptide, cleaved by FlvT. A 2,3-didehydrobutyrine; by FlvM2 mark is found at T31 and T32. Cross-links (beta-methyllanthionine (Thr-Cys); by FlvM2) lie at residues 41–47 (TKNPQIC) and 53–56 (TVKC).

In terms of processing, contains DL-beta-methyllanthionine, when coepressed in E.coli with the flavecin synthetase FlvM2.

Its subcellular location is the secreted. In terms of biological role, lanthionine-containing peptide that does probably not show antibacterial activity, since its analog [+7]Flvbeta.f does not show antibacterial activity against M.luteus. Also does not show antibiotic activity when tested with [Del2]Flvalpha.a, an analog of Flvalpha.a, which is encoded by the same operon than Flvbeta.f. The bactericidal activity of lantibiotics is based on depolarization of energized bacterial cytoplasmic membranes, initiated by the formation of aqueous transmembrane pores. This Ruminococcus flavefaciens protein is Lantipeptide Flvbeta.f.